Here is a 261-residue protein sequence, read N- to C-terminus: tRNA U34 carboxymethyltransferase (261 aa).

Carboxy-S-adenosyl-L-methionine-binding positions include lysine 25, tryptophan 39, lysine 44, glycine 63, 114 to 115, tyrosine 135, and arginine 250; that span reads VE.

This sequence belongs to the class I-like SAM-binding methyltransferase superfamily. CmoB family. As to quaternary structure, homotetramer.

The enzyme catalyses carboxy-S-adenosyl-L-methionine + 5-hydroxyuridine(34) in tRNA = 5-carboxymethoxyuridine(34) in tRNA + S-adenosyl-L-homocysteine + H(+). Catalyzes carboxymethyl transfer from carboxy-S-adenosyl-L-methionine (Cx-SAM) to 5-hydroxyuridine (ho5U) to form 5-carboxymethoxyuridine (cmo5U) at position 34 in tRNAs. This Helicobacter pylori (strain J99 / ATCC 700824) (Campylobacter pylori J99) protein is tRNA U34 carboxymethyltransferase.